We begin with the raw amino-acid sequence, 233 residues long: Large ribosomal subunit protein uL1 (233 aa).

Belongs to the universal ribosomal protein uL1 family. In terms of assembly, part of the 50S ribosomal subunit.

Functionally, binds directly to 23S rRNA. The L1 stalk is quite mobile in the ribosome, and is involved in E site tRNA release. Protein L1 is also a translational repressor protein, it controls the translation of the L11 operon by binding to its mRNA. The chain is Large ribosomal subunit protein uL1 from Laribacter hongkongensis (strain HLHK9).